Consider the following 61-residue polypeptide: Probable tautomerase lmo2564 (61 aa).

Proline 2 functions as the Proton acceptor; via imino nitrogen in the catalytic mechanism.

It belongs to the 4-oxalocrotonate tautomerase family.

The sequence is that of Probable tautomerase lmo2564 from Listeria monocytogenes serovar 1/2a (strain ATCC BAA-679 / EGD-e).